A 473-amino-acid polypeptide reads, in one-letter code: 1-deoxy-D-xylulose 5-phosphate reductoisomerase, chloroplastic (473 aa).

The N-terminal 49 residues, 1–49 (MALKVVSFPGDLAAVSFLDSNRGGAFNQLKVDLPFQTRDRRAVSLRRTC), are a transit peptide targeting the chloroplast. NADPH-binding residues include Thr85, Gly86, Ser87, Ile88, Gly111, Asn113, and Asn199. Lys200 is a binding site for 1-deoxy-D-xylulose 5-phosphate. Glu201 contacts NADPH. Mn(2+) is bound at residue Asp225. The 1-deoxy-D-xylulose 5-phosphate site is built by Ser226, Glu227, Ser251, and His274. Position 227 (Glu227) interacts with Mn(2+). Gly280 contributes to the NADPH binding site. 1-deoxy-D-xylulose 5-phosphate-binding residues include Ser287, Asn292, Lys293, and Glu296. Mn(2+) is bound at residue Glu296.

Belongs to the DXR family. Mn(2+) is required as a cofactor. The cofactor is Mg(2+).

It is found in the plastid. The protein localises to the chloroplast stroma. The catalysed reaction is 2-C-methyl-D-erythritol 4-phosphate + NADP(+) = 1-deoxy-D-xylulose 5-phosphate + NADPH + H(+). It functions in the pathway isoprenoid biosynthesis; isopentenyl diphosphate biosynthesis via DXP pathway; isopentenyl diphosphate from 1-deoxy-D-xylulose 5-phosphate: step 1/6. Its function is as follows. Enzyme of the plastid non-mevalonate pathway for isoprenoid biosynthesis that catalyzes the NADPH-dependent rearrangement and reduction of 1-deoxy-D-xylulose-5-phosphate (DXP) to 2-C-methyl-D-erythritol 4-phosphate (MEP). Required for chloroplast development. This chain is 1-deoxy-D-xylulose 5-phosphate reductoisomerase, chloroplastic (DXR), found in Oryza sativa subsp. japonica (Rice).